We begin with the raw amino-acid sequence, 282 residues long: WRKY transcription factor 71 (282 aa).

The disordered stretch occupies residues 63–121; that stretch reads LTSNSPVVSSSSNEGEPKENTNDKSDQMEDNEGDLHGVGESSKQLTKQGKKKGEKKERE. A compositionally biased stretch (low complexity) spans 65–75; that stretch reads SNSPVVSSSSN. The segment covering 77 to 99 has biased composition (basic and acidic residues); that stretch reads GEPKENTNDKSDQMEDNEGDLHG. Positions 130–195 form a DNA-binding region, WRKY; sequence SEIDHLEDGY…YEGKHNHPIP (66 aa).

It belongs to the WRKY group II-c family.

Its subcellular location is the nucleus. Functionally, transcription factor. Interacts specifically with the W box (5'-(T)TGAC[CT]-3'), a frequently occurring elicitor-responsive cis-acting element. In Arabidopsis thaliana (Mouse-ear cress), this protein is WRKY transcription factor 71 (WRKY71).